The chain runs to 133 residues: Ribonuclease VapC1 (133 aa).

Residues aspartate 7 and aspartate 98 each coordinate Mg(2+).

The protein belongs to the PINc/VapC protein family. Mg(2+) serves as cofactor.

In terms of biological role, toxic component of a type II toxin-antitoxin (TA) system. The cognate antitoxin is VapB1. The sequence is that of Ribonuclease VapC1 from Mycobacterium tuberculosis (strain CDC 1551 / Oshkosh).